We begin with the raw amino-acid sequence, 226 residues long: Protein FMP52-1, mitochondrial (226 aa).

The transit peptide at 1–43 (MSAFVLGSTGLVGLQILKVLDSSTAFKKVSTVSRRLPSVTSGK) directs the protein to the mitochondrion.

Belongs to the FMP52 family.

Its subcellular location is the mitochondrion outer membrane. The sequence is that of Protein FMP52-1, mitochondrial (FMP521) from Scheffersomyces stipitis (strain ATCC 58785 / CBS 6054 / NBRC 10063 / NRRL Y-11545) (Yeast).